Consider the following 216-residue polypeptide: Peptide methionine sulfoxide reductase MsrA (216 aa).

The active site involves Cys54.

This sequence belongs to the MsrA Met sulfoxide reductase family.

It carries out the reaction L-methionyl-[protein] + [thioredoxin]-disulfide + H2O = L-methionyl-(S)-S-oxide-[protein] + [thioredoxin]-dithiol. The catalysed reaction is [thioredoxin]-disulfide + L-methionine + H2O = L-methionine (S)-S-oxide + [thioredoxin]-dithiol. Its function is as follows. Has an important function as a repair enzyme for proteins that have been inactivated by oxidation. Catalyzes the reversible oxidation-reduction of methionine sulfoxide in proteins to methionine. The sequence is that of Peptide methionine sulfoxide reductase MsrA from Xanthomonas euvesicatoria pv. vesicatoria (strain 85-10) (Xanthomonas campestris pv. vesicatoria).